The chain runs to 503 residues: MSIKAEEISALIKQQLANYQDELTVDEVGTVTYVGDGIARANGLDNALAGELVEFDDGTYGMAQNLESNDVGIIILGSFKGIREGDTVKRTGRIMEVPVGEELIGRVVNPLGQPIDGLGEVKTNKTRPVERKAPGVMERQSVTEPLQTGLKAIDALVPIGRGQRELVIGDRKTGKTSVAIDTIINQKDQDMICIYVAIGQKDSTVRTSVETLRKFGAMDYTIVVSAGPSSPAPLLYLAPYAGAAMGEEFMFNGKHVLIVYDDLSKQADAYRELSLILRRPPGREAYPGDVFYLHSRLLERAAKLSDELGGGSMTALPFIETKAGDVSAYIPTNVISITDGQIFLDSDRFYSGIRPAIDAGTSVSRVGGNAQVKAMKKVAGTLRTDLASYSELESFAQFGSDLDEATQAKLNRGRRTVEVLKQPLHKPLPVEKQVLILYALTHGFLDPVKVDDILPYQDGLFDYFDANHKDLLDEIANTGKLPETEKLDAAIKEYAATFQASEK.

169–176 is an ATP binding site; the sequence is GDRKTGKT.

The protein belongs to the ATPase alpha/beta chains family. F-type ATPases have 2 components, CF(1) - the catalytic core - and CF(0) - the membrane proton channel. CF(1) has five subunits: alpha(3), beta(3), gamma(1), delta(1), epsilon(1). CF(0) has three main subunits: a(1), b(2) and c(9-12). The alpha and beta chains form an alternating ring which encloses part of the gamma chain. CF(1) is attached to CF(0) by a central stalk formed by the gamma and epsilon chains, while a peripheral stalk is formed by the delta and b chains.

Its subcellular location is the cell membrane. The enzyme catalyses ATP + H2O + 4 H(+)(in) = ADP + phosphate + 5 H(+)(out). Functionally, produces ATP from ADP in the presence of a proton gradient across the membrane. The alpha chain is a regulatory subunit. This is ATP synthase subunit alpha from Ligilactobacillus salivarius (strain UCC118) (Lactobacillus salivarius).